The following is a 453-amino-acid chain: DNA repair protein RadA (453 aa).

The segment at 11-28 (CNQCGATAPKWLGQCPGC) adopts a C4-type zinc-finger fold. 93-100 (GDPGIGKS) is an ATP binding site. Positions 250–254 (KNRFG) match the RadA KNRFG motif motif. The lon-protease-like stretch occupies residues 349–453 (DVFLSITGGL…TIKDAIRLLL (105 aa)).

The protein belongs to the RecA family. RadA subfamily.

In terms of biological role, DNA-dependent ATPase involved in processing of recombination intermediates, plays a role in repairing DNA breaks. Stimulates the branch migration of RecA-mediated strand transfer reactions, allowing the 3' invading strand to extend heteroduplex DNA faster. Binds ssDNA in the presence of ADP but not other nucleotides, has ATPase activity that is stimulated by ssDNA and various branched DNA structures, but inhibited by SSB. Does not have RecA's homology-searching function. This chain is DNA repair protein RadA, found in Chlamydia pneumoniae (Chlamydophila pneumoniae).